The sequence spans 207 residues: Interferon kappa (207 aa).

Residues 1–27 (MSTKPDMIQKCLWLEILMGIFIAGTLS) form the signal peptide. 2 disulfide bridges follow: cysteine 30/cysteine 128 and cysteine 59/cysteine 181. Residues 118–148 (LDQQAEYLNQCLEEDKNENEDMKEMKENEMK) adopt a coiled-coil conformation.

It belongs to the alpha/beta interferon family. In terms of tissue distribution, expressed in keratinocytes, monocytes and in resting dendritic cells.

It is found in the secreted. Functionally, may play a role in the regulation of immune cell function. Cytokine that imparts cellular protection against viral infection in a species-specific manner. Activates the interferon-stimulated response element signaling pathway. It is able to directly modulate cytokine release from monocytes and dendritic cells. Binds heparin. In Homo sapiens (Human), this protein is Interferon kappa (IFNK).